Here is a 122-residue protein sequence, read N- to C-terminus: Large ribosomal subunit protein uL14 (122 aa).

Belongs to the universal ribosomal protein uL14 family. As to quaternary structure, part of the 50S ribosomal subunit. Forms a cluster with proteins L3 and L19. In the 70S ribosome, L14 and L19 interact and together make contacts with the 16S rRNA in bridges B5 and B8.

Binds to 23S rRNA. Forms part of two intersubunit bridges in the 70S ribosome. In Cyanothece sp. (strain PCC 7425 / ATCC 29141), this protein is Large ribosomal subunit protein uL14.